We begin with the raw amino-acid sequence, 192 residues long: ATP synthase subunit b 2 (192 aa).

The helical transmembrane segment at 39–59 (SGFLAQLIWLALAFGLLYYLM) threads the bilayer.

It belongs to the ATPase B chain family. In terms of assembly, F-type ATPases have 2 components, F(1) - the catalytic core - and F(0) - the membrane proton channel. F(1) has five subunits: alpha(3), beta(3), gamma(1), delta(1), epsilon(1). F(0) has three main subunits: a(1), b(2) and c(10-14). The alpha and beta chains form an alternating ring which encloses part of the gamma chain. F(1) is attached to F(0) by a central stalk formed by the gamma and epsilon chains, while a peripheral stalk is formed by the delta and b chains.

The protein localises to the cell inner membrane. F(1)F(0) ATP synthase produces ATP from ADP in the presence of a proton or sodium gradient. F-type ATPases consist of two structural domains, F(1) containing the extramembraneous catalytic core and F(0) containing the membrane proton channel, linked together by a central stalk and a peripheral stalk. During catalysis, ATP synthesis in the catalytic domain of F(1) is coupled via a rotary mechanism of the central stalk subunits to proton translocation. In terms of biological role, component of the F(0) channel, it forms part of the peripheral stalk, linking F(1) to F(0). The b'-subunit is a diverged and duplicated form of b found in plants and photosynthetic bacteria. The protein is ATP synthase subunit b 2 (atpF2) of Methylobacterium radiotolerans (strain ATCC 27329 / DSM 1819 / JCM 2831 / NBRC 15690 / NCIMB 10815 / 0-1).